The following is a 190-amino-acid chain: MRGLRPALSTFLFLLLITGGVYPLLTTALGQWWFPWQANGSLIREGDTVRGSALIGQNFTGNGYFHGRPSATAEMPYNPQASGGSNLAVSNPELDKQIAARVAALRAANPDASTSVPVELVTASASGLDNNITPQAAAWQIPRVAKARNLSVEQLTQLIAKYSQQPLVKYIGQPVVNIVELNLALDKLDE.

The chain crosses the membrane as a helical span at residues 10–30 (TFLFLLLITGGVYPLLTTALG).

Belongs to the KdpC family. In terms of assembly, the system is composed of three essential subunits: KdpA, KdpB and KdpC.

The protein resides in the cell inner membrane. Its function is as follows. Part of the high-affinity ATP-driven potassium transport (or Kdp) system, which catalyzes the hydrolysis of ATP coupled with the electrogenic transport of potassium into the cytoplasm. This subunit acts as a catalytic chaperone that increases the ATP-binding affinity of the ATP-hydrolyzing subunit KdpB by the formation of a transient KdpB/KdpC/ATP ternary complex. The chain is Potassium-transporting ATPase KdpC subunit from Escherichia fergusonii (strain ATCC 35469 / DSM 13698 / CCUG 18766 / IAM 14443 / JCM 21226 / LMG 7866 / NBRC 102419 / NCTC 12128 / CDC 0568-73).